We begin with the raw amino-acid sequence, 181 residues long: UPF0398 protein LMOf2365_1918 (181 aa).

This sequence belongs to the UPF0398 family.

In Listeria monocytogenes serotype 4b (strain F2365), this protein is UPF0398 protein LMOf2365_1918.